The following is a 607-amino-acid chain: Sulfite reductase [NADPH] flavoprotein alpha-component (607 aa).

A Flavodoxin-like domain is found at 66–204 (VTILYGSQTG…AAGQWHADVL (139 aa)). Residues 72–77 (SQTGNG), 119–122 (STHG), and 155–164 (LGDSSYEFFC) contribute to the FMN site. The FAD-binding FR-type domain maps to 239 to 456 (QNPYRAEVLV…VEPNKHFRLP (218 aa)). FAD-binding positions include Thr327, Leu361, 395 to 398 (RLYS), 413 to 415 (TVA), and 428 to 431 (GGAS). NADP(+) contacts are provided by residues 527 to 528 (SR), 533 to 537 (KIYVQ), and Asp569. Tyr607 lines the FAD pocket.

Belongs to the NADPH-dependent sulphite reductase flavoprotein subunit CysJ family. It in the N-terminal section; belongs to the flavodoxin family. The protein in the C-terminal section; belongs to the flavoprotein pyridine nucleotide cytochrome reductase family. Alpha(8)-beta(8). The alpha component is a flavoprotein, the beta component is a hemoprotein. FAD is required as a cofactor. The cofactor is FMN.

It catalyses the reaction hydrogen sulfide + 3 NADP(+) + 3 H2O = sulfite + 3 NADPH + 4 H(+). It participates in sulfur metabolism; hydrogen sulfide biosynthesis; hydrogen sulfide from sulfite (NADPH route): step 1/1. Functionally, component of the sulfite reductase complex that catalyzes the 6-electron reduction of sulfite to sulfide. This is one of several activities required for the biosynthesis of L-cysteine from sulfate. The flavoprotein component catalyzes the electron flow from NADPH -&gt; FAD -&gt; FMN to the hemoprotein component. The polypeptide is Sulfite reductase [NADPH] flavoprotein alpha-component (Shewanella oneidensis (strain ATCC 700550 / JCM 31522 / CIP 106686 / LMG 19005 / NCIMB 14063 / MR-1)).